We begin with the raw amino-acid sequence, 281 residues long: 2-dehydro-3-deoxyphosphooctonate aldolase (281 aa).

It belongs to the KdsA family.

The protein resides in the cytoplasm. The catalysed reaction is D-arabinose 5-phosphate + phosphoenolpyruvate + H2O = 3-deoxy-alpha-D-manno-2-octulosonate-8-phosphate + phosphate. It participates in carbohydrate biosynthesis; 3-deoxy-D-manno-octulosonate biosynthesis; 3-deoxy-D-manno-octulosonate from D-ribulose 5-phosphate: step 2/3. It functions in the pathway bacterial outer membrane biogenesis; lipopolysaccharide biosynthesis. This is 2-dehydro-3-deoxyphosphooctonate aldolase from Pseudomonas syringae pv. tomato (strain ATCC BAA-871 / DC3000).